Consider the following 257-residue polypeptide: Imidazole glycerol phosphate synthase subunit HisF (257 aa).

Catalysis depends on residues D11 and D130.

It belongs to the HisA/HisF family. Heterodimer of HisH and HisF.

The protein resides in the cytoplasm. The enzyme catalyses 5-[(5-phospho-1-deoxy-D-ribulos-1-ylimino)methylamino]-1-(5-phospho-beta-D-ribosyl)imidazole-4-carboxamide + L-glutamine = D-erythro-1-(imidazol-4-yl)glycerol 3-phosphate + 5-amino-1-(5-phospho-beta-D-ribosyl)imidazole-4-carboxamide + L-glutamate + H(+). It functions in the pathway amino-acid biosynthesis; L-histidine biosynthesis; L-histidine from 5-phospho-alpha-D-ribose 1-diphosphate: step 5/9. IGPS catalyzes the conversion of PRFAR and glutamine to IGP, AICAR and glutamate. The HisF subunit catalyzes the cyclization activity that produces IGP and AICAR from PRFAR using the ammonia provided by the HisH subunit. This Bradyrhizobium diazoefficiens (strain JCM 10833 / BCRC 13528 / IAM 13628 / NBRC 14792 / USDA 110) protein is Imidazole glycerol phosphate synthase subunit HisF.